Here is a 163-residue protein sequence, read N- to C-terminus: Gas vesicle protein H2 (163 aa).

Residues 57–92 (LGSDARSPSTPAGNADDAGDAETAHIETRASDDSDD) form a disordered region. Residues 78 to 88 (ETAHIETRASD) are compositionally biased toward basic and acidic residues.

This sequence belongs to the gas vesicle GvpH family. In terms of assembly, gvpF to GvpM interact with each other in vitro, and may form multi-subunit complex(es). Interacts with GvpC. Might interact with GvpA.

The protein localises to the gas vesicle. It is found in the cytoplasm. Functionally, a minor component of the gas vesicle, also found in soluble extracts. Proteins GvpF to GvpM might be involved in nucleating gas vesicle formation. Gas vesicles are hollow, gas filled proteinaceous nanostructures found in several microbial planktonic microorganisms. They allow positioning of halobacteria at the optimal depth for growth in the poorly aerated, shallow brine pools of their habitat. Expression of 2 c-vac DNA fragments containing 2 divergently transcribed regions (gvpE-gvpF-gvpG-gvpH-gvpI-gvpJ-gvpK-gvpL-gvpM and gvpA-gvpC-gvpN-gvpO) allows H.volcanii to produce gas vesicles. In Halobacterium salinarum (strain ATCC 700922 / JCM 11081 / NRC-1) (Halobacterium halobium), this protein is Gas vesicle protein H2.